Here is a 378-residue protein sequence, read N- to C-terminus: tRNA-specific 2-thiouridylase MnmA (378 aa).

ATP contacts are provided by residues 14–21 (AMSGGVDS) and Leu40. The active-site Nucleophile is Cys109. Residues Cys109 and Cys208 are joined by a disulfide bond. Gly133 is a binding site for ATP. The tract at residues 156–158 (KDQ) is interaction with tRNA. The active-site Cysteine persulfide intermediate is the Cys208.

Belongs to the MnmA/TRMU family.

The protein localises to the cytoplasm. The enzyme catalyses S-sulfanyl-L-cysteinyl-[protein] + uridine(34) in tRNA + AH2 + ATP = 2-thiouridine(34) in tRNA + L-cysteinyl-[protein] + A + AMP + diphosphate + H(+). Catalyzes the 2-thiolation of uridine at the wobble position (U34) of tRNA, leading to the formation of s(2)U34. The protein is tRNA-specific 2-thiouridylase MnmA of Streptomyces griseus subsp. griseus (strain JCM 4626 / CBS 651.72 / NBRC 13350 / KCC S-0626 / ISP 5235).